The primary structure comprises 238 residues: Purine nucleoside phosphorylase DeoD-type (238 aa).

Position 4 (histidine 4) interacts with a purine D-ribonucleoside. Residues glycine 20, arginine 24, arginine 43, and arginine 87–serine 90 contribute to the phosphate site. A purine D-ribonucleoside-binding positions include glutamate 179 to glutamate 181 and serine 203 to aspartate 204. Aspartate 204 (proton donor) is an active-site residue.

The protein belongs to the PNP/UDP phosphorylase family. As to quaternary structure, homohexamer; trimer of homodimers.

The catalysed reaction is a purine D-ribonucleoside + phosphate = a purine nucleobase + alpha-D-ribose 1-phosphate. The enzyme catalyses a purine 2'-deoxy-D-ribonucleoside + phosphate = a purine nucleobase + 2-deoxy-alpha-D-ribose 1-phosphate. Functionally, catalyzes the reversible phosphorolytic breakdown of the N-glycosidic bond in the beta-(deoxy)ribonucleoside molecules, with the formation of the corresponding free purine bases and pentose-1-phosphate. The chain is Purine nucleoside phosphorylase DeoD-type from Actinobacillus succinogenes (strain ATCC 55618 / DSM 22257 / CCUG 43843 / 130Z).